The following is a 262-amino-acid chain: Ribosome-recycling factor, mitochondrial (262 aa).

The N-terminal 55 residues, M1–F55, are a transit peptide targeting the mitochondrion.

Belongs to the RRF family.

It is found in the mitochondrion. In terms of biological role, responsible for the disassembly of ribosomes from messenger RNA at the termination of mitochondrial protein biosynthesis. Acts in collaboration with GFM2. Promotes mitochondrial ribosome recycling by dissolution of intersubunit contacts. The chain is Ribosome-recycling factor, mitochondrial (MRRF) from Bos taurus (Bovine).